The following is a 281-amino-acid chain: Probable thioesterase gloN (281 aa).

Residues 207–233 (LDDGSNNSRDLNETSPTETSNDSETQA) are disordered. Positions 210–232 (GSNNSRDLNETSPTETSNDSETQ) are enriched in polar residues.

It belongs to the AMT4 thioesterase family.

Its pathway is mycotoxin biosynthesis. In terms of biological role, probable thioesterase; part of the gene cluster that mediates the biosynthesis of pneumocandins, lipohexapeptides of the echinocandin family that prevent fungal cell wall formation by non-competitive inhibition of beta-1,3-glucan synthase. The 10,12-dimethylmyristoyl side chain is synthesized by the reducing polyketide synthase gloL/GLPKS4. The thioesterase gloN/GLHYD exclusively interacts with gloL/GLPKS4 to maintain turnover of the polyketide side chain. The 10R,12S-dimethylmyristic acid is then transferred to the first thiolation domain of the nonribosomal peptide synthetase gloA/GLNRPS4 by the acyl-AMP ligase gloD/GLligase, followed by its acylation to L-ornithine to trigger elongation of the cyclic hexapeptide. L-ornithine, 4R-hydroxyl-L-proline (generated from L-proline by the dioxygenase gloF/GLOXY2), 3S-hydroxyl-L-homotyrosine (generated by gloG/GLHtyB, gloH/GLHtyA, gloI/GLHtyC, gloJ/GLHtyD and hydroxylated at C-3 by the dioxygenase gloM/GLOXY1), 3R-hydroxyl-L-glutamine (generated from L-glutamine probably by the dioxygenase gloE/GLOXY3) and 3S-hydroxyl-L-proline (generated from L-proline by the dioxygenase gloF/GLOXY2 to yield pneumocandin B0), or 3S-hydroxyl-4S-methyl-L-proline (generated from L-leucine by the dioxygenase gloC/GLOXY4 to yield pneumocandin A0) are sequentially added to the growing chain. The last C domain of gloA/GLNRPS4 is proposed to be responsible for cyclization by condensation to form the peptide bond between L-ornithine and 3S-hydroxyl-4S-methyl-L-proline (for pneumocandin A0) or 3S-hydroxyl-L-proline (for pneumocandin B0). Finally, the subsequent C-4 hydroxylation of 3S-hydroxyl-L-homotyrosine and L-ornithine dihydroxylation at C-4 and C-5 are performed by the cytochrome P450 monooxygenases gloP/GLP450-1 and gloO/GLP450-2, respectively. In Glarea lozoyensis (strain ATCC 20868 / MF5171), this protein is Probable thioesterase gloN.